Reading from the N-terminus, the 571-residue chain is Proline--tRNA ligase (571 aa).

The protein belongs to the class-II aminoacyl-tRNA synthetase family. ProS type 1 subfamily. As to quaternary structure, homodimer.

Its subcellular location is the cytoplasm. The enzyme catalyses tRNA(Pro) + L-proline + ATP = L-prolyl-tRNA(Pro) + AMP + diphosphate. In terms of biological role, catalyzes the attachment of proline to tRNA(Pro) in a two-step reaction: proline is first activated by ATP to form Pro-AMP and then transferred to the acceptor end of tRNA(Pro). As ProRS can inadvertently accommodate and process non-cognate amino acids such as alanine and cysteine, to avoid such errors it has two additional distinct editing activities against alanine. One activity is designated as 'pretransfer' editing and involves the tRNA(Pro)-independent hydrolysis of activated Ala-AMP. The other activity is designated 'posttransfer' editing and involves deacylation of mischarged Ala-tRNA(Pro). The misacylated Cys-tRNA(Pro) is not edited by ProRS. The chain is Proline--tRNA ligase from Actinobacillus pleuropneumoniae serotype 3 (strain JL03).